We begin with the raw amino-acid sequence, 492 residues long: Variant surface glycoprotein MITAT 1.1 (492 aa).

Residues 1–32 (MATGRAKNTKWARWLSTAGLIIVVTLPATTMA) form the signal peptide. 2 disulfides stabilise this stretch: cysteine 47/cysteine 177 and cysteine 155/cysteine 222. Residues asparagine 298 and asparagine 471 are each glycosylated (N-linked (GlcNAc...) asparagine). Serine 475 carries GPI-anchor amidated serine lipidation. The propeptide at 476–492 (NSFLIHKAPLLLAFLLF) is removed in mature form.

The protein resides in the cell membrane. VSG forms a coat on the surface of the parasite. The trypanosome evades the immune response of the host by expressing a series of antigenically distinct VSGs from an estimated 1000 VSG genes. The protein is Variant surface glycoprotein MITAT 1.1 of Trypanosoma brucei brucei.